The chain runs to 396 residues: L-lactate dehydrogenase (396 aa).

In terms of domain architecture, FMN hydroxy acid dehydrogenase spans 1-380; the sequence is MIISAASDYR…TQDSLVQGLG (380 aa). Y24 provides a ligand contact to substrate. The FMN site is built by S106 and Q127. A substrate-binding site is contributed by Y129. Residue T155 coordinates FMN. Position 164 (R164) interacts with substrate. K251 contacts FMN. The active-site Proton acceptor is H275. R278 contacts substrate. Residue 306 to 330 participates in FMN binding; sequence DSGIRNGLDVVRMIALGADTVLLGR.

The protein belongs to the FMN-dependent alpha-hydroxy acid dehydrogenase family. The cofactor is FMN.

The protein localises to the cell inner membrane. It catalyses the reaction (S)-lactate + A = pyruvate + AH2. In terms of biological role, catalyzes the conversion of L-lactate to pyruvate. Is coupled to the respiratory chain. This is L-lactate dehydrogenase from Shigella boydii serotype 4 (strain Sb227).